The sequence spans 665 residues: Mitochondrial Rho GTPase 1 (665 aa).

Over 1 to 634 (MTNDVIRIVV…NQDPEEETNT (634 aa)) the chain is Cytoplasmic. In terms of domain architecture, Miro 1 spans 3 to 177 (NDVIRIVVCG…FYLCQKAVMH (175 aa)). GTP contacts are provided by residues 12-19 (GDEGVGKS), 61-67 (DTQFSNS), and 119-122 (NVFD). 2 consecutive EF-hand domains span residues 193–228 (NAVA…CFGR) and 313–348 (EGYR…TPGI). 9 residues coordinate Ca(2+): Asp-206, Asp-208, Asp-210, Tyr-212, Glu-217, Asp-326, Asp-328, Asp-330, and Glu-337. A Miro 2 domain is found at 452–618 (RSVFNCFVLG…FIQLAEAAQQ (167 aa)). GTP contacts are provided by residues 461-468 (GSHMSGKT), 498-502 (EMTGG), and 567-570 (LKAD). The chain crosses the membrane as a helical; Anchor for type IV membrane protein span at residues 635–655 (IMPFALAGGATVLLAAAVAWI). Topologically, residues 656 to 665 (FKNVRVAGRE) are mitochondrial intermembrane.

It belongs to the mitochondrial Rho GTPase family.

The protein resides in the mitochondrion outer membrane. Its function is as follows. Mitochondrial GTPase involved in mitochondrial trafficking. Probably involved in control of anterograde transport of mitochondria and their subcellular distribution. This Yarrowia lipolytica (strain CLIB 122 / E 150) (Yeast) protein is Mitochondrial Rho GTPase 1 (GEM1).